A 417-amino-acid chain; its full sequence is MAMNFVTFNQDYSYLAVATSKGFRIFTTDPFAKSYETKEGHIAIIEMLFSTSLVALILSPRRLQITNTKRQSTICELTFPTTVLAVKLNRKRLVIVLEDQIYLYDIQTMKLLYTIQTSPNPNAICALSPSSDNCYLAYPLPQKAPPSSFTPPSHAPPGNTHVSPTSGEVLIFDSLKLEAINVIEAHRSPLACITLNSDGTLLATASDKGTIIRVFSVPDGHKLYQFRRGSMPSRIFSMSFNTTSTLLCVSSSTETIHLFKLSQQTSSSRDTSPSSSTPAGRDRAFSQSSLGHSPDRSDVSGEPDSSEFPARKHNGTLMGIIRRTSQNVGSTVAAKVGGYLPKGVSEMWEPARDFAWIKLPKPSQNAGGSGNNGPLRSVVAMSNNTPQVMVITSDGNFYVFSIDLSKGGEGTLTKQYS.

WD repeat units follow at residues 1-36 (MAMN…KSYE), 69-114 (KRQS…LLYT), 139-182 (PLPQ…AINV), 185-225 (AHRS…KLYQ), 230-269 (SMPS…SSSR), 312-358 (KHNG…AWIK), and 370-410 (GNNG…GGEG). The L/FRRG motif signature appears at 226-230 (FRRGS). The disordered stretch occupies residues 261–314 (LSQQTSSSRDTSPSSSTPAGRDRAFSQSSLGHSPDRSDVSGEPDSSEFPARKHN). Positions 262-278 (SQQTSSSRDTSPSSSTP) are enriched in low complexity.

It belongs to the WD repeat PROPPIN family. As to quaternary structure, component of the PI(3,5)P2 regulatory complex.

It localises to the preautophagosomal structure membrane. Its subcellular location is the vacuole membrane. It is found in the endosome membrane. In terms of biological role, the PI(3,5)P2 regulatory complex regulates both the synthesis and turnover of phosphatidylinositol 3,5-bisphosphate (PtdIns(3,5)P2). Necessary for proper vacuole morphology. Plays an important role in osmotically-induced vacuole fragmentation. Required for cytoplasm to vacuole transport (Cvt) vesicle formation, pexophagy and starvation-induced autophagy. Involved in correct atg9 trafficking to the pre-autophagosomal structure. Might also be involved in premeiotic DNA replication. The sequence is that of Autophagy-related protein 18 (atg18) from Aspergillus clavatus (strain ATCC 1007 / CBS 513.65 / DSM 816 / NCTC 3887 / NRRL 1 / QM 1276 / 107).